The primary structure comprises 176 residues: Ribosome maturation factor RimM (176 aa).

The PRC barrel domain occupies 104-176; sequence EDEYYFYEIL…KIIAKEMEWI (73 aa).

This sequence belongs to the RimM family. Binds ribosomal protein uS19.

The protein resides in the cytoplasm. In terms of biological role, an accessory protein needed during the final step in the assembly of 30S ribosomal subunit, possibly for assembly of the head region. Essential for efficient processing of 16S rRNA. May be needed both before and after RbfA during the maturation of 16S rRNA. It has affinity for free ribosomal 30S subunits but not for 70S ribosomes. The protein is Ribosome maturation factor RimM of Thermotoga maritima (strain ATCC 43589 / DSM 3109 / JCM 10099 / NBRC 100826 / MSB8).